The primary structure comprises 729 residues: Hydroxamate siderophore receptor FhuE (729 aa).

A signal peptide spans 1 to 36 (MLSTQFNRDNQYQAITKPSLLAGCIALALLPSAAFA). The short motif at 42–49 (ETVIVEGS) is the TonB box element. Residues 48–72 (GSATAPDDGENDYSVTSTSAGTKMQ) form a disordered region. Residues 60-72 (YSVTSTSAGTKMQ) are compositionally biased toward polar residues. The 110-residue stretch at 74–183 (TQRDIPQSVT…PSAAINMVRK (110 aa)) folds into the TBDR plug domain. Residues R117, R142, W275, Y357, N373, and W416 each coordinate Fe(III)-coprogen. The TBDR beta-barrel domain occupies 189 to 729 (EFKGDVSAEY…NFSITGTYQF (541 aa)). A TonB C-terminal box motif is present at residues 712 to 729 (SIVYGTPRNFSITGTYQF).

This sequence belongs to the TonB-dependent receptor family.

It is found in the cell outer membrane. Involved in the active transport across the outer membrane of iron complexed with linear hydroxamate siderophores coprogen, rhodotorulic acid and ferrioxamine B. Binds Fe-coprogen with high affinity, rhodotorulic acid to a lesser extent, and weakly to ferrioxamine B. Selective for planar siderophores. Does not use cyclic siderophores ferrichrome nor ferrioxamine E as substrates. This Escherichia coli (strain K12) protein is Hydroxamate siderophore receptor FhuE.